A 1357-amino-acid polypeptide reads, in one-letter code: DNA-directed RNA polymerase subunit beta (1357 aa).

It belongs to the RNA polymerase beta chain family. In terms of assembly, the RNAP catalytic core consists of 2 alpha, 1 beta, 1 beta' and 1 omega subunit. When a sigma factor is associated with the core the holoenzyme is formed, which can initiate transcription.

The enzyme catalyses RNA(n) + a ribonucleoside 5'-triphosphate = RNA(n+1) + diphosphate. DNA-dependent RNA polymerase catalyzes the transcription of DNA into RNA using the four ribonucleoside triphosphates as substrates. This chain is DNA-directed RNA polymerase subunit beta, found in Pseudomonas fluorescens (strain SBW25).